Reading from the N-terminus, the 281-residue chain is Homoserine kinase (281 aa).

83–93 (PVSSGLGSSAA) contacts ATP.

It belongs to the GHMP kinase family. Homoserine kinase subfamily.

It localises to the cytoplasm. The enzyme catalyses L-homoserine + ATP = O-phospho-L-homoserine + ADP + H(+). Its pathway is amino-acid biosynthesis; L-threonine biosynthesis; L-threonine from L-aspartate: step 4/5. Catalyzes the ATP-dependent phosphorylation of L-homoserine to L-homoserine phosphate. This Thermotoga petrophila (strain ATCC BAA-488 / DSM 13995 / JCM 10881 / RKU-1) protein is Homoserine kinase.